Reading from the N-terminus, the 120-residue chain is Protein p14.5 (120 aa).

Disordered stretches follow at residues 1 to 27 (MADFNSPIQYLKEDSRDRTSIGSLEYD) and 80 to 120 (REFT…HKSK). At alanine 2 the chain carries N-acetylalanine; by host. Residues 103–120 (KPKKKKHLFPKLSSHKSK) show a composition bias toward basic residues.

The protein belongs to the asfivirus structural protein p14.5 family. In terms of assembly, interacts with the major capsid protein. Interacts with host IRF3; this interaction interferes with the recruitment of IRF3 to TBK1. Acetylated.

The protein localises to the virion. In terms of biological role, structural protein required for transport of intracellular particles from the assembly sites to the plasma membrane. Binds to both ssDNA and dsDNA. Suppressed the activation of the cGAS/STING pathway by interfering with the recruitment of IRF3 to TBK1, which in turn suppresses IRF3 phosphorylation, decreasing interferon production. In Ornithodoros (relapsing fever ticks), this protein is Protein p14.5.